A 341-amino-acid polypeptide reads, in one-letter code: Heat-inducible transcription repressor HrcA (341 aa).

Belongs to the HrcA family.

Its function is as follows. Negative regulator of class I heat shock genes (grpE-dnaK-dnaJ and groELS operons). Prevents heat-shock induction of these operons. The polypeptide is Heat-inducible transcription repressor HrcA (Carboxydothermus hydrogenoformans (strain ATCC BAA-161 / DSM 6008 / Z-2901)).